The primary structure comprises 196 residues: MVGGLKRKHSDLEEEEERWEWSPAGLQSYQQALLRISLDKVQRSLGPRAPSLRRHVLIHNTLQQLQAALRLAPAPALPPEPLFLGEEDFSLSATIGSILRELDTSMDGTEPPQNPVTPLGLQNEVPPQPDPVFLEALSSRYLGDSGLDDFFLDIDTSAVEKEPARAPPEPPHNLFCAPGSWEWNELDHIMEIILGS.

The disordered stretch occupies residues 1–21 (MVGGLKRKHSDLEEEEERWEW). The SERTA domain occupies 26–73 (LQSYQQALLRISLDKVQRSLGPRAPSLRRHVLIHNTLQQLQAALRLAP). The interval 104–125 (TSMDGTEPPQNPVTPLGLQNEV) is disordered.

In terms of assembly, interacts with RPA2. (Microbial infection) Interacts with influenza virus PA, PB1 and PB2,leading to inhibition of RdRp complex assembly. As to quaternary structure, (Microbial infection) Interacts with zika virus capsid protein.

The protein localises to the nucleus. In terms of biological role, antiviral interferon-stimulated protein that plays a role in innate immunity and in the suppression of viruses through different mechanisms. Plays a role in the late phase response of TLR-induced immune effector expression. During influenza infection, interacts with PB2, PB1, and PA to disrupt the formation of the viral RdRp complex. Inhibits zika virus by interacting with the capsid protein in the nucleolus and reducing its abundance through proteasomal degradation. Strong transcriptional coactivator. In Homo sapiens (Human), this protein is SERTA domain-containing protein 3 (SERTAD3).